A 290-amino-acid polypeptide reads, in one-letter code: Inner membrane protein YebZ (290 aa).

Residues M1–R10 lie on the Periplasmic side of the membrane. A helical transmembrane segment spans residues F11–A31. The Cytoplasmic segment spans residues P32–H49. Residues A50 to G70 form a helical membrane-spanning segment. At T71–Q89 the chain is on the periplasmic side. A helical transmembrane segment spans residues F90–M110. At Q111–R117 the chain is on the cytoplasmic side. Residues L118–L138 form a helical membrane-spanning segment. Residues N139–H151 lie on the Periplasmic side of the membrane. The chain crosses the membrane as a helical span at residues A152–M172. Over Q173 to H195 the chain is Cytoplasmic. A helical transmembrane segment spans residues F196–P216. At P217–Y222 the chain is on the periplasmic side. Residues W223 to A243 traverse the membrane as a helical segment. At N244–A260 the chain is on the cytoplasmic side. Residues P261–I281 traverse the membrane as a helical segment. The Periplasmic portion of the chain corresponds to S282 to F290.

It belongs to the CopD family.

Its subcellular location is the cell inner membrane. The protein is Inner membrane protein YebZ (yebZ) of Escherichia coli (strain K12).